Here is a 476-residue protein sequence, read N- to C-terminus: Serine/threonine-protein kinase Chk1 (476 aa).

An interaction with CLSPN region spans residues 1 to 265 (MAVPFVEDWD…IPDIKKDRWY (265 aa)). The Protein kinase domain occupies 9–265 (WDLVQTLGEG…IPDIKKDRWY (257 aa)). ATP-binding positions include 15–23 (LGEGAYGEV) and Lys-38. Residue Asp-130 is the Proton acceptor of the active site. Residue Lys-132 forms a Glycyl lysine isopeptide (Lys-Gly) (interchain with G-Cter in ubiquitin) linkage. The interval 267–329 (KPLNRGAKRP…EPRTGLSLWD (63 aa)) is disordered. Ser-280 carries the phosphoserine; by PKB/AKT1 modification. Low complexity predominate over residues 280–291 (SGGMSESSSGFS). Ser-286, Ser-296, and Ser-301 each carry phosphoserine. A compositionally biased stretch (polar residues) spans 298–320 (LDFSPINSGSSEENVKFSSSQPE). Phosphoserine; by ATM and ATR is present on residues Ser-317 and Ser-345. The interval 391–476 (QCLKETFEKL…SSQKVWFPVT (86 aa)) is autoinhibitory region. Lys-436 is covalently cross-linked (Glycyl lysine isopeptide (Lys-Gly) (interchain with G-Cter in ubiquitin)). Residues Ser-463, Ser-467, and Ser-468 each carry the phosphoserine modification.

The protein belongs to the protein kinase superfamily. CAMK Ser/Thr protein kinase family. NIM1 subfamily. Interacts (phosphorylated by ATR) with RAD51. Interacts with and phosphorylates CLSPN, an adapter protein that regulates the ATR-dependent phosphorylation of CHEK1. Interacts with BRCA1. Interacts with and phosphorylates CDC25A, CDC25B and CDC25C. Interacts with FBXO6, which regulates CHEK1. Interacts with PPM1D, which regulates CHEK1 through dephosphorylation. Interacts with TIMELESS; DNA damage-dependent. Interacts with FEM1B; activates CHEK1 in response to stress. Interacts with TLK1. Interacts with XPO1 and YWHAZ. Interacts with CDK5RAP3; antagonizes CHEK1. Phosphorylated by ATR in a RAD17-dependent manner in response to ultraviolet irradiation and inhibition of DNA replication. Phosphorylated by ATM in response to ionizing irradiation. ATM and ATR can both phosphorylate Ser-317 and Ser-345 and this results in enhanced kinase activity. Phosphorylation at Ser-345 induces a change in the conformation of the protein, activates the kinase activity and is a prerequisite for interaction with FBXO6 and subsequent ubiquitination at Lys-436. Phosphorylation at Ser-345 also increases binding to 14-3-3 proteins and promotes nuclear retention. Conversely, dephosphorylation at Ser-345 by PPM1D may contribute to exit from checkpoint mediated cell cycle arrest. Phosphorylation at Ser-280 by AKT1/PKB, may promote mono and/or diubiquitination. Also phosphorylated at undefined residues during mitotic arrest, resulting in decreased activity. Post-translationally, ubiquitinated. Mono or diubiquitination promotes nuclear exclusion. The activated form (phosphorylated on Ser-345) is polyubiquitinated at Lys-436 by some SCF-type E3 ubiquitin ligase complex containing FBXO6 promoting its degradation. Ubiquitination and degradation are required to terminate the checkpoint and ensure that activated CHEK1 does not accumulate as cells progress through S phase, when replication forks encounter transient impediments during normal DNA replication. 'Lys-63'-mediated ubiquitination by TRAF4 at Lys-132 activates cell cycle arrest and activation of DNA repair. In terms of processing, proteolytically cleaved at the C-terminus by SPRTN during normal DNA replication, thereby promoting CHEK1 removal from chromatin and activating the protein kinase activity. Expressed in brain, heart, liver, lung, skeletal muscle, spleen and testis. In terms of tissue distribution, expressed only in liver.

It is found in the nucleus. Its subcellular location is the chromosome. The protein localises to the cytoplasm. It localises to the cytoskeleton. The protein resides in the microtubule organizing center. It is found in the centrosome. The enzyme catalyses L-seryl-[protein] + ATP = O-phospho-L-seryl-[protein] + ADP + H(+). It catalyses the reaction L-threonyl-[protein] + ATP = O-phospho-L-threonyl-[protein] + ADP + H(+). Activated through phosphorylation predominantly by ATR but also by ATM in response to DNA damage or inhibition of DNA replication. Activation is modulated by several mediators including CLSPN, BRCA1 and FEM1B. Proteolytic cleavage at the C-terminus by SPRTN during normal DNA replication activates the protein kinase activity. Its function is as follows. Serine/threonine-protein kinase which is required for checkpoint-mediated cell cycle arrest and activation of DNA repair in response to the presence of DNA damage or unreplicated DNA. May also negatively regulate cell cycle progression during unperturbed cell cycles. This regulation is achieved by a number of mechanisms that together help to preserve the integrity of the genome. Recognizes the substrate consensus sequence [R-X-X-S/T]. Binds to and phosphorylates CDC25A, CDC25B and CDC25C. Phosphorylation of CDC25A at 'Ser-178' and 'Thr-507' and phosphorylation of CDC25C at 'Ser-216' creates binding sites for 14-3-3 proteins which inhibit CDC25A and CDC25C. Phosphorylation of CDC25A at 'Ser-76', 'Ser-124', 'Ser-178', 'Ser-279' and 'Ser-293' promotes proteolysis of CDC25A. Phosphorylation of CDC25A at 'Ser-76' primes the protein for subsequent phosphorylation at 'Ser-79', 'Ser-82' and 'Ser-88' by NEK11, which is required for polyubiquitination and degradation of CDCD25A. Inhibition of CDC25 leads to increased inhibitory tyrosine phosphorylation of CDK-cyclin complexes and blocks cell cycle progression. Also phosphorylates NEK6. Binds to and phosphorylates RAD51 at 'Thr-309', which promotes the release of RAD51 from BRCA2 and enhances the association of RAD51 with chromatin, thereby promoting DNA repair by homologous recombination. Phosphorylates multiple sites within the C-terminus of TP53, which promotes activation of TP53 by acetylation and promotes cell cycle arrest and suppression of cellular proliferation. Also promotes repair of DNA cross-links through phosphorylation of FANCE. Binds to and phosphorylates TLK1 at 'Ser-743', which prevents the TLK1-dependent phosphorylation of the chromatin assembly factor ASF1A. This may enhance chromatin assembly both in the presence or absence of DNA damage. May also play a role in replication fork maintenance through regulation of PCNA. May regulate the transcription of genes that regulate cell-cycle progression through the phosphorylation of histones. Phosphorylates histone H3.1 (to form H3T11ph), which leads to epigenetic inhibition of a subset of genes. May also phosphorylate RB1 to promote its interaction with the E2F family of transcription factors and subsequent cell cycle arrest. Phosphorylates SPRTN, promoting SPRTN recruitment to chromatin. Reduces replication stress and activates the G2/M checkpoint, by phosphorylating and inactivating PABIR1/FAM122A and promoting the serine/threonine-protein phosphatase 2A-mediated dephosphorylation and stabilization of WEE1 levels and activity. In Rattus norvegicus (Rat), this protein is Serine/threonine-protein kinase Chk1 (Chek1).